Reading from the N-terminus, the 78-residue chain is UPF0335 protein RP113 (78 aa).

This sequence belongs to the UPF0335 family.

The sequence is that of UPF0335 protein RP113 from Rickettsia prowazekii (strain Madrid E).